The primary structure comprises 454 residues: MSLDSRRYHITTYGCQMNKADSERMAGVLENMGYQWSENPDDANLILCNTCTIRDNAEHKVYSYLGRQAKRKHAQPDLTLVVAGCVAQQEGDALLRRVPELDLVMGPQHANRLQDLLEQVASGQQVLATEPIHIVEDITKPRRDSAVTAWVNVIYGCNERCTYCVVPNVRGVEQSRTPEAIRAEMVQLGEQGFKEVTLLGQNIDAYGRDLPGTTSEGRHQHTLTDLLYFVHDVPGIERIRFATSHPRYFTERLIQACYELPKVCEHFHIPFQSGDNDVLKAMSRGYTHEKYRRIIDNIRAIMPDASISADAIVGFPGETEEQFMNTMQLVEDIEFDLLNTAAYSPRPGTPAALWDNQLSEEVKADRLQRLNRLVGVCAELRSQRYANRIEEVLVEDQNPKDPTQVMGRTRGNRLTFFPGNIEQLRGEIIAVKVTEVRSFSLTGEPLSSVATAVR.

The 117-residue stretch at 6–122 (RRYHITTYGC…LQDLLEQVAS (117 aa)) folds into the MTTase N-terminal domain. [4Fe-4S] cluster-binding residues include C15, C51, C85, C157, C161, and C164. The Radical SAM core domain occupies 143–384 (RDSAVTAWVN…GVCAELRSQR (242 aa)). The TRAM domain occupies 383-447 (QRYANRIEEV…SFSLTGEPLS (65 aa)).

It belongs to the methylthiotransferase family. MiaB subfamily. In terms of assembly, monomer. [4Fe-4S] cluster is required as a cofactor.

It localises to the cytoplasm. The enzyme catalyses N(6)-dimethylallyladenosine(37) in tRNA + (sulfur carrier)-SH + AH2 + 2 S-adenosyl-L-methionine = 2-methylsulfanyl-N(6)-dimethylallyladenosine(37) in tRNA + (sulfur carrier)-H + 5'-deoxyadenosine + L-methionine + A + S-adenosyl-L-homocysteine + 2 H(+). In terms of biological role, catalyzes the methylthiolation of N6-(dimethylallyl)adenosine (i(6)A), leading to the formation of 2-methylthio-N6-(dimethylallyl)adenosine (ms(2)i(6)A) at position 37 in tRNAs that read codons beginning with uridine. This Acaryochloris marina (strain MBIC 11017) protein is tRNA-2-methylthio-N(6)-dimethylallyladenosine synthase.